Reading from the N-terminus, the 955-residue chain is Auxin response factor 11 (955 aa).

Residues 143–245 (FCKNLTASDT…QLLLGVRRAT (103 aa)) constitute a DNA-binding region (TF-B3). Residues 518 to 543 (ESKLNATSRDPRNTDSYTSRSTSEQN) show a composition bias toward polar residues. Disordered stretches follow at residues 518–573 (ESKL…LSSA) and 609–646 (TQGN…KSVN). Residues 551–560 (KTRRSKKGLP) are compositionally biased toward basic residues. One can recognise a PB1 domain in the interval 852-936 (RTYTKVQKQG…RCIRILSPSE (85 aa)).

Belongs to the ARF family. Homodimers and heterodimers.

It localises to the nucleus. Auxin response factors (ARFs) are transcriptional factors that bind specifically to the DNA sequence 5'-TGTCTC-3' found in the auxin-responsive promoter elements (AuxREs). The chain is Auxin response factor 11 (ARF11) from Oryza sativa subsp. indica (Rice).